The chain runs to 86 residues: Neurotoxin LmNaTx34.1 (86 aa).

A signal peptide spans methionine 1 to glycine 18. One can recognise an LCN-type CS-alpha/beta domain in the interval aspartate 19 to serine 85. 4 cysteine pairs are disulfide-bonded: cysteine 32–cysteine 84, cysteine 36–cysteine 57, cysteine 43–cysteine 64, and cysteine 47–cysteine 66.

It belongs to the long (4 C-C) scorpion toxin superfamily. Sodium channel inhibitor family. Beta subfamily. In terms of tissue distribution, expressed by the venom gland.

The protein localises to the secreted. Functionally, binds voltage-independently at site-4 of sodium channels (Nav) and shift the voltage of activation toward more negative potentials thereby affecting sodium channel activation and promoting spontaneous and repetitive firing. The chain is Neurotoxin LmNaTx34.1 from Lychas mucronatus (Chinese swimming scorpion).